Reading from the N-terminus, the 229-residue chain is Ribonuclease 3 (229 aa).

Residues 4–133 (WEELQESVGF…FIGALYLDNG (130 aa)) enclose the RNase III domain. Position 46 (Glu-46) interacts with Mg(2+). Residue Asp-50 is part of the active site. Asp-119 and Glu-122 together coordinate Mg(2+). Glu-122 is an active-site residue. The DRBM domain occupies 159-228 (DYKTQLQEIV…AQFAINQLTH (70 aa)).

The protein belongs to the ribonuclease III family. As to quaternary structure, homodimer. Mg(2+) serves as cofactor.

It localises to the cytoplasm. The enzyme catalyses Endonucleolytic cleavage to 5'-phosphomonoester.. Digests double-stranded RNA. Involved in the processing of primary rRNA transcript to yield the immediate precursors to the large and small rRNAs (23S and 16S). Processes some mRNAs, and tRNAs when they are encoded in the rRNA operon. Processes pre-crRNA and tracrRNA of type II CRISPR loci if present in the organism. The polypeptide is Ribonuclease 3 (Listeria innocua serovar 6a (strain ATCC BAA-680 / CLIP 11262)).